The following is a 122-amino-acid chain: Lectin A (122 aa).

Tyr38 lines the Ca(2+) pocket. Residues Glu44, Gln57, and Asp96 each coordinate an alpha-D-galactoside. Residues Asp96, Thr100, Asp103, and Asn104 each contribute to the Ca(2+) site. An an alpha-D-galactoside-binding site is contributed by Asp103.

The protein belongs to the LecA/PllA lectin family. In terms of assembly, homotetramer.

Functionally, lectin that specifically binds alpha-galactoside-terminating glycoconjugates. Shows high apparent binding to the alpha-Gal epitope (Gal-alpha-1,3-Gal-beta-1,4-GlcNAc terminating glycans) as well as to Gal-alpha-1,4-GlcNAc and Gal-alpha-1,3-GalNAc. Gal-alpha-1,3-GalNAc may be one natural ligand bound by PllA both in the nematode symbiont and in infected insects. This is Lectin A from Photorhabdus laumondii subsp. laumondii (strain DSM 15139 / CIP 105565 / TT01) (Photorhabdus luminescens subsp. laumondii).